Here is a 386-residue protein sequence, read N- to C-terminus: Beta-citrylglutamate synthase B (386 aa).

Residues 119 to 304 enclose the ATP-grasp domain; sequence FQELAGHGVP…VAGIIADYAA (186 aa). ATP is bound by residues K158, 193-203, and R219; that span reads QKYVKESHGRD. Residues D264, E277, and N279 each contribute to the Mg(2+) site. Residues D264, E277, and N279 each coordinate Mn(2+). The interval 325 to 359 is disordered; the sequence is ASETSEPELGPPASTAVDNMSASSSSVDSDPESTE. A compositionally biased stretch (low complexity) spans 338 to 352; the sequence is STAVDNMSASSSSVD.

It belongs to the RimK family. The cofactor is Mg(2+). It depends on Mn(2+) as a cofactor.

The protein localises to the cytoplasm. The enzyme catalyses citrate + L-glutamate + ATP = beta-citrylglutamate + ADP + phosphate + H(+). The catalysed reaction is N-acetyl-L-aspartate + L-glutamate + ATP = N-acetyl-L-aspartyl-L-glutamate + ADP + phosphate + H(+). Catalyzes the synthesis of beta-citryl-L-glutamate and N-acetyl-L-aspartyl-L-glutamate. Beta-citryl-L-glutamate is synthesized more efficiently than N-acetyl-L-aspartyl-L-glutamate. This chain is Beta-citrylglutamate synthase B (RIMKLB), found in Homo sapiens (Human).